The sequence spans 250 residues: Leucyl/phenylalanyl-tRNA--protein transferase (250 aa).

The protein belongs to the L/F-transferase family.

It is found in the cytoplasm. The catalysed reaction is N-terminal L-lysyl-[protein] + L-leucyl-tRNA(Leu) = N-terminal L-leucyl-L-lysyl-[protein] + tRNA(Leu) + H(+). It carries out the reaction N-terminal L-arginyl-[protein] + L-leucyl-tRNA(Leu) = N-terminal L-leucyl-L-arginyl-[protein] + tRNA(Leu) + H(+). The enzyme catalyses L-phenylalanyl-tRNA(Phe) + an N-terminal L-alpha-aminoacyl-[protein] = an N-terminal L-phenylalanyl-L-alpha-aminoacyl-[protein] + tRNA(Phe). In terms of biological role, functions in the N-end rule pathway of protein degradation where it conjugates Leu, Phe and, less efficiently, Met from aminoacyl-tRNAs to the N-termini of proteins containing an N-terminal arginine or lysine. The protein is Leucyl/phenylalanyl-tRNA--protein transferase of Xanthomonas oryzae pv. oryzae (strain MAFF 311018).